A 113-amino-acid chain; its full sequence is Putative pterin-4-alpha-carbinolamine dehydratase (113 aa).

This sequence belongs to the pterin-4-alpha-carbinolamine dehydratase family.

The enzyme catalyses (4aS,6R)-4a-hydroxy-L-erythro-5,6,7,8-tetrahydrobiopterin = (6R)-L-erythro-6,7-dihydrobiopterin + H2O. This chain is Putative pterin-4-alpha-carbinolamine dehydratase, found in Pelodictyon phaeoclathratiforme (strain DSM 5477 / BU-1).